Here is a 215-residue protein sequence, read N- to C-terminus: Ribose-5-phosphate isomerase A (215 aa).

Substrate contacts are provided by residues 26–29 (TGST), 79–82 (DGAD), and 92–95 (KGGG). Glu-101 (proton acceptor) is an active-site residue. Lys-119 provides a ligand contact to substrate.

Belongs to the ribose 5-phosphate isomerase family. Homodimer.

The enzyme catalyses aldehydo-D-ribose 5-phosphate = D-ribulose 5-phosphate. Its pathway is carbohydrate degradation; pentose phosphate pathway; D-ribose 5-phosphate from D-ribulose 5-phosphate (non-oxidative stage): step 1/1. In terms of biological role, catalyzes the reversible conversion of ribose-5-phosphate to ribulose 5-phosphate. The sequence is that of Ribose-5-phosphate isomerase A from Xanthomonas euvesicatoria pv. vesicatoria (strain 85-10) (Xanthomonas campestris pv. vesicatoria).